Consider the following 590-residue polypeptide: Proline--tRNA ligase (590 aa).

The protein belongs to the class-II aminoacyl-tRNA synthetase family. ProS type 1 subfamily. As to quaternary structure, homodimer.

It localises to the cytoplasm. The catalysed reaction is tRNA(Pro) + L-proline + ATP = L-prolyl-tRNA(Pro) + AMP + diphosphate. Catalyzes the attachment of proline to tRNA(Pro) in a two-step reaction: proline is first activated by ATP to form Pro-AMP and then transferred to the acceptor end of tRNA(Pro). As ProRS can inadvertently accommodate and process non-cognate amino acids such as alanine and cysteine, to avoid such errors it has two additional distinct editing activities against alanine. One activity is designated as 'pretransfer' editing and involves the tRNA(Pro)-independent hydrolysis of activated Ala-AMP. The other activity is designated 'posttransfer' editing and involves deacylation of mischarged Ala-tRNA(Pro). The misacylated Cys-tRNA(Pro) is not edited by ProRS. This is Proline--tRNA ligase from Clavibacter sepedonicus (Clavibacter michiganensis subsp. sepedonicus).